Here is a 63-residue protein sequence, read N- to C-terminus: Cecropin-2 (63 aa).

A signal peptide spans 1–21 (MNFNKVLVLLAVIFAVFAGQT). The propeptide occupies 22-23 (EA). Lys-62 is subject to Lysine amide.

The protein belongs to the cecropin family.

The protein localises to the secreted. Functionally, cecropins have lytic and antibacterial activity against several Gram-positive and Gram-negative bacteria. The sequence is that of Cecropin-2 (CEC2) from Ceratitis capitata (Mediterranean fruit fly).